Consider the following 486-residue polypeptide: Cardiolipin synthase A (486 aa).

A run of 2 helical transmembrane segments spans residues 3 to 23 (IFYN…IANI) and 38 to 58 (MSWL…WFFF). 2 consecutive PLD phosphodiesterase domains span residues 219-246 (VDVR…VDPY) and 399-426 (QKGL…DMRS). Catalysis depends on residues histidine 224, lysine 226, aspartate 231, histidine 404, lysine 406, and aspartate 411.

Belongs to the phospholipase D family. Cardiolipin synthase subfamily. ClsA sub-subfamily.

It localises to the cell inner membrane. The enzyme catalyses 2 a 1,2-diacyl-sn-glycero-3-phospho-(1'-sn-glycerol) = a cardiolipin + glycerol. In terms of biological role, catalyzes the reversible phosphatidyl group transfer from one phosphatidylglycerol molecule to another to form cardiolipin (CL) (diphosphatidylglycerol) and glycerol. The protein is Cardiolipin synthase A of Buchnera aphidicola subsp. Acyrthosiphon pisum (strain 5A).